The sequence spans 257 residues: Large ribosomal subunit protein bL28m (257 aa).

The N-terminal 55 residues, 1–55 (MPLHRYPVHLWQKLRLRQGICARLPAHFLRSLEEERTPTPVHYKPHGTKFKINPK), are a transit peptide targeting the mitochondrion.

It belongs to the bacterial ribosomal protein bL28 family. In terms of assembly, component of the mitochondrial ribosome large subunit (39S) which comprises a 16S rRNA and about 50 distinct proteins. Interacts with OXA1L.

It is found in the mitochondrion. In Mus musculus (Mouse), this protein is Large ribosomal subunit protein bL28m (Mrpl28).